Reading from the N-terminus, the 510-residue chain is Nectin-4 (510 aa).

The first 31 residues, 1 to 31, serve as a signal peptide directing secretion; sequence MPLSLGAEMWGPAAWLLLLLLLASFTGQRLA. Residues 32 to 144 form the Ig-like V-type domain; that stretch reads GELETSDLVT…GSFQARLRLR (113 aa). Residues 32–349 lie on the Extracellular side of the membrane; that stretch reads GELETSDLVT…GKQVDLVSAS (318 aa). 3 cysteine pairs are disulfide-bonded: cysteine 52–cysteine 127, cysteine 171–cysteine 223, and cysteine 270–cysteine 315. 2 Ig-like C2-type domains span residues 148–237 and 248–331; these read PPLP…QRIT and ASVR…VVVD. The N-linked (GlcNAc...) asparagine glycan is linked to asparagine 281. The helical transmembrane segment at 350–370 threads the bilayer; sequence VVVVGVIAALLFCLLVVVVVL. At 371–510 the chain is on the cytoplasmic side; that stretch reads MSRYHRRKAQ…IYINGRGHLV (140 aa). Residues 400-412 show a composition bias toward basic and acidic residues; sequence RLHSHHSDPRNQP. The disordered stretch occupies residues 400–475; that stretch reads RLHSHHSDPR…GRAEEEEDRD (76 aa).

It belongs to the nectin family. In terms of assembly, self-associates. Interacts via its Ig-like V-type domain with NECTIN1 Ig-like V-type domain. Interacts via its C-terminus with AFDN. Interacts with TIGIT.

It is found in the cell membrane. It localises to the cell junction. Its subcellular location is the adherens junction. Functionally, seems to be involved in cell adhesion through trans-homophilic and -heterophilic interactions, the latter including specifically interactions with NECTIN1. Plays a role in the senescence-associated cell size enlargement via SFK/PI3K/Rac1 and thus promotes senescent cell survival. Also participates in the innate immune response by acting as a ligand for the receptor TIGIT to inhibit NK-cell activity. This Bos taurus (Bovine) protein is Nectin-4.